The chain runs to 495 residues: Glutamyl-tRNA(Gln) amidotransferase subunit A (495 aa).

Residues lysine 75 and serine 150 each act as charge relay system in the active site. Serine 174 serves as the catalytic Acyl-ester intermediate.

It belongs to the amidase family. GatA subfamily. As to quaternary structure, heterotrimer of A, B and C subunits.

It carries out the reaction L-glutamyl-tRNA(Gln) + L-glutamine + ATP + H2O = L-glutaminyl-tRNA(Gln) + L-glutamate + ADP + phosphate + H(+). Its function is as follows. Allows the formation of correctly charged Gln-tRNA(Gln) through the transamidation of misacylated Glu-tRNA(Gln) in organisms which lack glutaminyl-tRNA synthetase. The reaction takes place in the presence of glutamine and ATP through an activated gamma-phospho-Glu-tRNA(Gln). In Ralstonia nicotianae (strain ATCC BAA-1114 / GMI1000) (Ralstonia solanacearum), this protein is Glutamyl-tRNA(Gln) amidotransferase subunit A.